The primary structure comprises 448 residues: DNA repair protein RadA (448 aa).

The C4-type zinc-finger motif lies at 10-27 (CSNCGNTSPKWSGQCFDC). 91–98 (GDPGIGKS) serves as a coordination point for ATP. The RadA KNRFG motif motif lies at 250-254 (KNRFG). The interval 349 to 448 (EVYLSIAGGL…KDLKLLLGSS (100 aa)) is lon-protease-like.

The protein belongs to the RecA family. RadA subfamily.

Its function is as follows. DNA-dependent ATPase involved in processing of recombination intermediates, plays a role in repairing DNA breaks. Stimulates the branch migration of RecA-mediated strand transfer reactions, allowing the 3' invading strand to extend heteroduplex DNA faster. Binds ssDNA in the presence of ADP but not other nucleotides, has ATPase activity that is stimulated by ssDNA and various branched DNA structures, but inhibited by SSB. Does not have RecA's homology-searching function. This Rickettsia bellii (strain RML369-C) protein is DNA repair protein RadA.